Consider the following 1169-residue polypeptide: Rabankyrin-5 (1169 aa).

The residue at position 2 (A2) is an N-acetylalanine. The 63-residue stretch at 68-130 folds into the BTB domain; it reads SDLKIKVGDR…IYTDELEFRE (63 aa). ANK repeat units lie at residues 217–247, 255–284, 288–317, 322–362, and 366–396; these read KTEY…QLPG, NGDL…DVDM, NGWS…LVNA, AQET…NPNM, and KGRT…DLEL. S270 carries the phosphoserine modification. The NPF motif lies at 421-423; it reads NPF. ANK repeat units lie at residues 490–519, 542–572, 588–617, 621–650, 654–683, 687–716, 724–753, 769–798, 802–832, 836–865, 870–899, 905–934, 938–967, 971–1001, 1005–1037, and 1043–1072; these read WGET…NPNL, YLQT…ALHA, RDQT…SIND, DGQT…DINV, DGET…DMSV, KGNP…DATC, CLQT…DVNS, DGQT…NVNA, EGRT…ELSV, QGLT…GAAE, KGRN…NVNS, SKLT…KVNE, HRQT…DFAA, NGNN…DAEA, RGQS…EYPL, and EGNT…RLGV. The segment at 650-759 is interaction with RHOD and RAB5A; the sequence is VRTQDGETAL…DVNSPRQPGT (110 aa). Residues 1104 to 1164 form an FYVE-type zinc finger; it reads WCDGSNCYEC…VCNICFDVLT (61 aa). Zn(2+) is bound by residues C1110, C1113, C1126, C1129, C1134, C1137, C1156, and C1159.

Interacts with RAB5A (in GTP-bound form). Interacts with RHOD (independent of GTP-loaded status). Interacts with EHD1. Interacts with VPS26A; the interaction is independent of EHD1 and is indicative for an association with the cargo recognition subcomplex of the retromer complex. As to expression, expressed in kidney proximal tubule epithelial cells; at protein level.

It localises to the cytoplasm. The protein localises to the endosome membrane. The protein resides in the cytoplasmic vesicle. In terms of biological role, proposed effector of Rab5. Binds to phosphatidylinositol 3-phosphate (PI(3)P). Involved in homotypic early endosome fusion and to a lesser extent in heterotypic fusion of chlathrin-coated vesicles with early endosomes. Required for correct endosomal localization. Involved in the internalization and trafficking of activated tyrosine kinase receptors such as PDGFRB. Regulates the subcellular localization of the retromer complex in a EHD1-dependent manner. Involved in endosome-to-Golgi transport and biosynthetic transport to late endosomes and lysosomes indicative for a regulation of retromer complex-mediated retrograde transport. Involved in macropinocytosis; the function is dependent on Rab5-GTP. In Mus musculus (Mouse), this protein is Rabankyrin-5 (Ankfy1).